We begin with the raw amino-acid sequence, 169 residues long: Large ribosomal subunit protein uL5 (169 aa).

It belongs to the universal ribosomal protein uL5 family. Part of the 50S ribosomal subunit; contacts the 5S rRNA and probably tRNA. Forms a bridge to the 30S subunit in the 70S ribosome.

Functionally, this is one of the proteins that bind and probably mediate the attachment of the 5S RNA into the large ribosomal subunit, where it forms part of the central protuberance. In the 70S ribosome it contacts protein S13 of the 30S subunit (bridge B1b), connecting the 2 subunits; this bridge is implicated in subunit movement. May contact the P site tRNA; the 5S rRNA and some of its associated proteins might help stabilize positioning of ribosome-bound tRNAs. This Methanococcoides burtonii (strain DSM 6242 / NBRC 107633 / OCM 468 / ACE-M) protein is Large ribosomal subunit protein uL5.